The sequence spans 587 residues: Glutaconyl-CoA decarboxylase subunit alpha (587 aa).

The CoA carboxyltransferase N-terminal domain maps to 31-298 (LKKIEEEIHQ…YDPEFFRVDD (268 aa)). Residues 31-558 (LKKIEEEIHQ…RGYVEAFTEA (528 aa)) are carboxyltransferase. The CoA carboxyltransferase C-terminal domain occupies 295–558 (RVDDPKAPAF…RGYVEAFTEA (264 aa)).

In terms of assembly, heterooctamer consisting of two alpha, two beta, two gamma and two delta subunits.

The enzyme catalyses (2E)-glutaconyl-CoA + Na(+)(in) + H(+) = (2E)-butenoyl-CoA + Na(+)(out) + CO2. It functions in the pathway amino-acid degradation; L-glutamate degradation via hydroxyglutarate pathway; crotonoyl-CoA from L-glutamate: step 5/5. Decarboxylase subunit of the primary sodium pump glutaconyl-CoA decarboxylase (GCD). In Acidaminococcus fermentans (strain ATCC 25085 / DSM 20731 / CCUG 9996 / CIP 106432 / VR4), this protein is Glutaconyl-CoA decarboxylase subunit alpha (gcdA).